The following is a 123-amino-acid chain: Ribosome-binding factor A (123 aa).

The protein belongs to the RbfA family. Monomer. Binds 30S ribosomal subunits, but not 50S ribosomal subunits or 70S ribosomes.

The protein localises to the cytoplasm. In terms of biological role, one of several proteins that assist in the late maturation steps of the functional core of the 30S ribosomal subunit. Associates with free 30S ribosomal subunits (but not with 30S subunits that are part of 70S ribosomes or polysomes). Required for efficient processing of 16S rRNA. May interact with the 5'-terminal helix region of 16S rRNA. This chain is Ribosome-binding factor A, found in Rickettsia bellii (strain OSU 85-389).